We begin with the raw amino-acid sequence, 164 residues long: MENYQGQHGYGADRVDVYGNPVAGQYGGGATAPGGGHGVMGMGGHHAGAGGQFQPVKEEHKTGGILHRSGSSSSSSSSEDDGMGGRRKKGIKEKIKEKLPGGNKGNNHQQQQMMGNTGGAYGQQGHAGMTGAGTGTGVHGAEYGNTGEKKGFMDKIKEKLPGQH.

A compositionally biased stretch (gly residues) spans 42–51; the sequence is MGGHHAGAGG. A disordered region spans residues 42 to 164; that stretch reads MGGHHAGAGG…KIKEKLPGQH (123 aa). Low complexity predominate over residues 105–115; it reads GNNHQQQQMMG. The span at 128–138 shows a compositional bias: gly residues; it reads GMTGAGTGTGV. Residues 147–164 show a composition bias toward basic and acidic residues; the sequence is GEKKGFMDKIKEKLPGQH.

This sequence belongs to the plant dehydrin family.

This chain is Dehydrin Rab16C (RAB16C), found in Oryza sativa subsp. indica (Rice).